The sequence spans 105 residues: Cysteine-rich venom protein VAR2 (105 aa).

A signal peptide spans 1–22 (MILLKLYLTLAAILCQSRGTTS).

This sequence belongs to the CRISP family. Contains 8 disulfide bonds. Expressed by the venom gland.

The protein resides in the secreted. Its function is as follows. Blocks ryanodine receptors, and potassium channels. The chain is Cysteine-rich venom protein VAR2 from Varanus acanthurus (Ridge-tailed monitor).